We begin with the raw amino-acid sequence, 285 residues long: NADPH-dependent 7-cyano-7-deazaguanine reductase (285 aa).

Residue 80–82 participates in substrate binding; the sequence is VES. 82–83 is an NADPH binding site; it reads SK. Cysteine 191 acts as the Thioimide intermediate in catalysis. The active-site Proton donor is the aspartate 198. 231–232 contributes to the substrate binding site; it reads HE. 260–261 is a binding site for NADPH; the sequence is RG.

Belongs to the GTP cyclohydrolase I family. QueF type 2 subfamily. Homodimer.

It localises to the cytoplasm. The catalysed reaction is 7-aminomethyl-7-carbaguanine + 2 NADP(+) = 7-cyano-7-deazaguanine + 2 NADPH + 3 H(+). It participates in tRNA modification; tRNA-queuosine biosynthesis. Its function is as follows. Catalyzes the NADPH-dependent reduction of 7-cyano-7-deazaguanine (preQ0) to 7-aminomethyl-7-deazaguanine (preQ1). This Psychrobacter arcticus (strain DSM 17307 / VKM B-2377 / 273-4) protein is NADPH-dependent 7-cyano-7-deazaguanine reductase.